The sequence spans 226 residues: Thiopurine S-methyltransferase (226 aa).

4 residues coordinate S-adenosyl-L-methionine: Trp-16, Met-51, Glu-72, and Arg-131.

The protein belongs to the class I-like SAM-binding methyltransferase superfamily. TPMT family.

It localises to the cytoplasm. The enzyme catalyses S-adenosyl-L-methionine + a thiopurine = S-adenosyl-L-homocysteine + a thiopurine S-methylether.. This Francisella tularensis subsp. novicida (strain U112) protein is Thiopurine S-methyltransferase.